A 343-amino-acid chain; its full sequence is tRNA-specific 2-thiouridylase MnmA (343 aa).

ATP-binding positions include 7 to 14 and M33; that span reads ALSGGVDS. C87 serves as the catalytic Nucleophile. A disulfide bond links C87 and C184. Position 111 (G111) interacts with ATP. The interval 135 to 137 is interaction with tRNA; it reads KDQ. The active-site Cysteine persulfide intermediate is the C184. Residues 289–290 are interaction with tRNA; it reads RY.

This sequence belongs to the MnmA/TRMU family.

It is found in the cytoplasm. The catalysed reaction is S-sulfanyl-L-cysteinyl-[protein] + uridine(34) in tRNA + AH2 + ATP = 2-thiouridine(34) in tRNA + L-cysteinyl-[protein] + A + AMP + diphosphate + H(+). Functionally, catalyzes the 2-thiolation of uridine at the wobble position (U34) of tRNA, leading to the formation of s(2)U34. The protein is tRNA-specific 2-thiouridylase MnmA of Desulforudis audaxviator (strain MP104C).